Consider the following 498-residue polypeptide: DNA primase (498 aa).

Residues 35–59 (CPFHPDDTPSFYVSPSKQIFKCFGC) form a CHC2-type zinc finger. One can recognise a Toprim domain in the interval 243 to 324 (GFAILVEGYF…EVYPVYLPEG (82 aa)). Mg(2+) is bound by residues Glu-249, Asp-293, and Asp-295.

Belongs to the DnaG primase family. Monomer. Interacts with DnaB. Requires Zn(2+) as cofactor. Mg(2+) is required as a cofactor.

The catalysed reaction is ssDNA + n NTP = ssDNA/pppN(pN)n-1 hybrid + (n-1) diphosphate.. Its function is as follows. RNA polymerase that catalyzes the synthesis of short RNA molecules used as primers for DNA polymerase during DNA replication. This chain is DNA primase, found in Aquifex aeolicus (strain VF5).